A 284-amino-acid chain; its full sequence is Pantothenate synthetase (284 aa).

30–37 serves as a coordination point for ATP; sequence MGNLHDGH. The Proton donor role is filled by His-37. Gln-61 contributes to the (R)-pantoate binding site. Residue Gln-61 participates in beta-alanine binding. 149 to 152 is an ATP binding site; the sequence is GEKD. Gln-155 contacts (R)-pantoate. ATP contacts are provided by residues Ile-178 and 186–189; that span reads LSSR.

This sequence belongs to the pantothenate synthetase family. Homodimer.

The protein resides in the cytoplasm. The enzyme catalyses (R)-pantoate + beta-alanine + ATP = (R)-pantothenate + AMP + diphosphate + H(+). It participates in cofactor biosynthesis; (R)-pantothenate biosynthesis; (R)-pantothenate from (R)-pantoate and beta-alanine: step 1/1. Catalyzes the condensation of pantoate with beta-alanine in an ATP-dependent reaction via a pantoyl-adenylate intermediate. This Salmonella paratyphi A (strain ATCC 9150 / SARB42) protein is Pantothenate synthetase.